The primary structure comprises 193 residues: Nucleoside triphosphate pyrophosphatase (193 aa).

The active-site Proton acceptor is the D70.

The protein belongs to the Maf family. The cofactor is a divalent metal cation.

The protein resides in the cytoplasm. The enzyme catalyses a ribonucleoside 5'-triphosphate + H2O = a ribonucleoside 5'-phosphate + diphosphate + H(+). The catalysed reaction is a 2'-deoxyribonucleoside 5'-triphosphate + H2O = a 2'-deoxyribonucleoside 5'-phosphate + diphosphate + H(+). In terms of biological role, nucleoside triphosphate pyrophosphatase. May have a dual role in cell division arrest and in preventing the incorporation of modified nucleotides into cellular nucleic acids. This Anaplasma phagocytophilum (strain HZ) protein is Nucleoside triphosphate pyrophosphatase.